The primary structure comprises 240 residues: Glutathione S-transferase theta-1 (240 aa).

One can recognise a GST N-terminal domain in the interval 2–82; sequence VLELYLDLLS…YLAHKYKVPD (81 aa). Glutathione-binding positions include His40, 53 to 54, and 66 to 67; these read RV and ES. One can recognise a GST C-terminal domain in the interval 88–222; the sequence is DLQARARVDE…VILKVKDCPP (135 aa).

It belongs to the GST superfamily. Theta family. Homodimer. In liver, highest expression found in central vein limiting plate hepatocytes. Also expressed in interlobular bile duct epithelial cells. In lung, expressed in club cells and ciliated cells of the bronchiolar epithelium and in type II alveolar cells of the lung parenchyma.

Its subcellular location is the cytoplasm. It localises to the nucleus. It carries out the reaction RX + glutathione = an S-substituted glutathione + a halide anion + H(+). Conjugation of reduced glutathione to a wide number of exogenous and endogenous hydrophobic electrophiles. Also binds steroids, bilirubin, carcinogens and numerous organic anions. Has dichloromethane dehalogenase activity. This Mus musculus (Mouse) protein is Glutathione S-transferase theta-1 (Gstt1).